Here is a 234-residue protein sequence, read N- to C-terminus: LRP chaperone MESD (234 aa).

Positions 1–33 are cleaved as a signal peptide; the sequence is MAASRWARKAVVLLCASDLLLLLLLLPPPGSCA. Residues 1-164 are chaperone domain; it reads MAASRWARKA…DRAIFMLRDG (164 aa). Disordered stretches follow at residues 31 to 95 and 187 to 234; these read SCAA…DFSK and GQVY…REDL. Residues 54 to 70 are compositionally biased toward basic and acidic residues; the sequence is DIRDYNDADMARLLEQW. Positions 71 to 80 are enriched in acidic residues; that stretch reads EKDDDIEEGD. The tract at residues 165–204 is escort domain; that stretch reads SYAWEIKDFLVGQDRCADVTLEGQVYPGKGGGSKEKNKTK. Positions 196–234 are enriched in basic and acidic residues; that stretch reads GSKEKNKTKQDKGKKKKEGDLKSRSSKEENRAGNKREDL. Asn-201 carries an N-linked (GlcNAc...) asparagine glycan. Residues 231 to 234 carry the Prevents secretion from ER motif; that stretch reads REDL.

This sequence belongs to the MESD family. Monomer. Interacts with LRP5; the interaction prevents LRP5 from forming aggregates and chaperones LRP6 to the plasma membrane. Interacts with LRP6; the interaction prevents LRP6 from forming aggregates and chaperones LRP6 to the plasma membrane. Interacts with LRP4; the interaction promotes glycosylation of LRP4 and its cell-surface expression.

Its subcellular location is the endoplasmic reticulum. Its function is as follows. Chaperone specifically assisting the folding of beta-propeller/EGF modules within the family of low-density lipoprotein receptors (LDLRs). Acts as a modulator of the Wnt pathway through chaperoning the coreceptors of the canonical Wnt pathway, LRP5 and LRP6, to the plasma membrane. Essential for specification of embryonic polarity and mesoderm induction. Plays an essential role in neuromuscular junction (NMJ) formation by promoting cell-surface expression of LRP4. May regulate phagocytosis of apoptotic retinal pigment epithelium (RPE) cells. The chain is LRP chaperone MESD from Homo sapiens (Human).